The chain runs to 465 residues: Ribulose bisphosphate carboxylase large chain (465 aa).

An N6,N6,N6-trimethyllysine modification is found at Lys-4. Residues Asn-113 and Thr-163 each contribute to the substrate site. The Proton acceptor role is filled by Lys-165. Lys-167 serves as a coordination point for substrate. Lys-191, Asp-193, and Glu-194 together coordinate Mg(2+). Lys-191 is subject to N6-carboxylysine. His-284 (proton acceptor) is an active-site residue. Substrate is bound by residues Arg-285, His-317, and Ser-369.

Belongs to the RuBisCO large chain family. Type I subfamily. In terms of assembly, heterohexadecamer of 8 large chains and 8 small chains; disulfide-linked. The disulfide link is formed within the large subunit homodimers. Mg(2+) serves as cofactor. The disulfide bond which can form in the large chain dimeric partners within the hexadecamer appears to be associated with oxidative stress and protein turnover.

The protein resides in the plastid. It is found in the chloroplast. It catalyses the reaction 2 (2R)-3-phosphoglycerate + 2 H(+) = D-ribulose 1,5-bisphosphate + CO2 + H2O. The enzyme catalyses D-ribulose 1,5-bisphosphate + O2 = 2-phosphoglycolate + (2R)-3-phosphoglycerate + 2 H(+). In terms of biological role, ruBisCO catalyzes two reactions: the carboxylation of D-ribulose 1,5-bisphosphate, the primary event in carbon dioxide fixation, as well as the oxidative fragmentation of the pentose substrate in the photorespiration process. Both reactions occur simultaneously and in competition at the same active site. This is Ribulose bisphosphate carboxylase large chain from Ailanthus altissima (Tree-of-heaven).